A 142-amino-acid chain; its full sequence is Membrane protein YneK (142 aa).

Residues 6–26 (FLWFILFWVIMMVVLLSIGGF) traverse the membrane as a helical segment.

Interacts with the N-terminal D1 domain of dynamin-like protein DynA.

The protein resides in the cell membrane. This Bacillus subtilis (strain 168) protein is Membrane protein YneK (yneK).